Consider the following 173-residue polypeptide: Small ribosomal subunit protein uS7 (173 aa).

This sequence belongs to the universal ribosomal protein uS7 family. In terms of assembly, part of the 30S ribosomal subunit. Contacts proteins S9 and S11.

One of the primary rRNA binding proteins, it binds directly to 16S rRNA where it nucleates assembly of the head domain of the 30S subunit. Is located at the subunit interface close to the decoding center, probably blocks exit of the E-site tRNA. This chain is Small ribosomal subunit protein uS7, found in Orientia tsutsugamushi (strain Boryong) (Rickettsia tsutsugamushi).